The following is a 277-amino-acid chain: Bis(5'-nucleosyl)-tetraphosphatase, symmetrical (277 aa).

It belongs to the Ap4A hydrolase family.

It carries out the reaction P(1),P(4)-bis(5'-adenosyl) tetraphosphate + H2O = 2 ADP + 2 H(+). Functionally, hydrolyzes diadenosine 5',5'''-P1,P4-tetraphosphate to yield ADP. This Bordetella pertussis (strain Tohama I / ATCC BAA-589 / NCTC 13251) protein is Bis(5'-nucleosyl)-tetraphosphatase, symmetrical.